A 1000-amino-acid polypeptide reads, in one-letter code: Lysine-specific histone demethylase 1 (1000 aa).

The interval Arg-104–Arg-123 is disordered. A coiled-coil region spans residues Ala-107 to Val-137. The SWIRM domain occupies Cys-153–Leu-249. FAD-binding positions include Val-260–Ala-302, Glu-301, and Leu-328–Ala-329. The demethylase activity stretch occupies residues Leu-279–Asp-950. Residues Ile-434 to Thr-529 adopt a coiled-coil conformation. The tract at residues Thr-780 to Lys-800 is disordered. The HMG box DNA-binding region spans Ser-841–Gln-921. Residue Ala-908–Arg-909 coordinates FAD. Residues Glu-959–Met-972 show a composition bias toward basic and acidic residues. The tract at residues Glu-959–Ser-1000 is disordered. Residues Asn-976 to Ile-991 show a composition bias toward acidic residues.

It belongs to the flavin monoamine oxidase family. As to quaternary structure, component of the SWM histone demethylase complex composed of at least lsd1, lsd2, phf1 and phf2. Interacts directly with lsd2. FAD is required as a cofactor.

The protein resides in the nucleus. Functionally, catalytic component of the SWM histone demethylase complex that specifically demethylates H3K9me2, a specific tag for epigenetic transcriptional activation, thereby acting as a corepressor. Acts by oxidizing the substrate by FAD to generate the corresponding imine that is subsequently hydrolyzed. Has a role in regulating heterochromatin propagation and euchromatic transcription. Also has a gene activating role. In Schizosaccharomyces pombe (strain 972 / ATCC 24843) (Fission yeast), this protein is Lysine-specific histone demethylase 1 (lsd1).